The following is a 141-amino-acid chain: ATP synthase epsilon chain (141 aa).

Belongs to the ATPase epsilon chain family. In terms of assembly, F-type ATPases have 2 components, CF(1) - the catalytic core - and CF(0) - the membrane proton channel. CF(1) has five subunits: alpha(3), beta(3), gamma(1), delta(1), epsilon(1). CF(0) has three main subunits: a, b and c.

It localises to the cell inner membrane. Functionally, produces ATP from ADP in the presence of a proton gradient across the membrane. The chain is ATP synthase epsilon chain from Teredinibacter turnerae (strain ATCC 39867 / T7901).